Here is a 709-residue protein sequence, read N- to C-terminus: Ribosomal RNA large subunit methyltransferase K/L (709 aa).

Positions 43–154 (LAYRITLWTR…NGVITIAMNF (112 aa)) constitute a THUMP domain.

The protein belongs to the methyltransferase superfamily. RlmKL family.

Its subcellular location is the cytoplasm. The enzyme catalyses guanosine(2445) in 23S rRNA + S-adenosyl-L-methionine = N(2)-methylguanosine(2445) in 23S rRNA + S-adenosyl-L-homocysteine + H(+). It catalyses the reaction guanosine(2069) in 23S rRNA + S-adenosyl-L-methionine = N(2)-methylguanosine(2069) in 23S rRNA + S-adenosyl-L-homocysteine + H(+). In terms of biological role, specifically methylates the guanine in position 2445 (m2G2445) and the guanine in position 2069 (m7G2069) of 23S rRNA. The protein is Ribosomal RNA large subunit methyltransferase K/L of Shewanella sp. (strain W3-18-1).